Here is a 269-residue protein sequence, read N- to C-terminus: Diaminopimelate epimerase (269 aa).

Substrate is bound by residues Asn-20 and Asn-63. The active-site Proton donor is the Cys-72. Substrate contacts are provided by residues 73–74 (GN), Asn-179, and 197–198 (ER). Cys-207 (proton acceptor) is an active-site residue. Substrate is bound at residue 208–209 (GT).

Belongs to the diaminopimelate epimerase family. In terms of assembly, homodimer.

Its subcellular location is the cytoplasm. It catalyses the reaction (2S,6S)-2,6-diaminopimelate = meso-2,6-diaminopimelate. It participates in amino-acid biosynthesis; L-lysine biosynthesis via DAP pathway; DL-2,6-diaminopimelate from LL-2,6-diaminopimelate: step 1/1. Functionally, catalyzes the stereoinversion of LL-2,6-diaminopimelate (L,L-DAP) to meso-diaminopimelate (meso-DAP), a precursor of L-lysine and an essential component of the bacterial peptidoglycan. The polypeptide is Diaminopimelate epimerase (Chlamydia muridarum (strain MoPn / Nigg)).